Consider the following 68-residue polypeptide: Beta-defensin 1 (68 aa).

The N-terminal stretch at 1–21 (MRTSYLLLFTLCLLLSEIASG) is a signal peptide. The propeptide occupies 22–32 (GNFLTGLGHRS). 3 disulfide bridges follow: Cys-37/Cys-66, Cys-44/Cys-59, and Cys-49/Cys-67.

Belongs to the beta-defensin family. As to quaternary structure, monomer. Homodimer.

It is found in the secreted. Its subcellular location is the membrane. Its function is as follows. Has bactericidal activity. May act as a ligand for C-C chemokine receptor CCR6. Positively regulates the sperm motility and bactericidal activity in a CCR6-dependent manner. Binds to CCR6 and triggers Ca2+ mobilization in the sperm which is important for its motility. The chain is Beta-defensin 1 (DEFB1) from Gorilla gorilla gorilla (Western lowland gorilla).